Reading from the N-terminus, the 66-residue chain is MKYTELKDKSIKELEELLHAKKAELFELRVKLKAMQLSNPNEIKKARRNIARINTAINAHYSSSVE.

It belongs to the universal ribosomal protein uL29 family.

The polypeptide is Large ribosomal subunit protein uL29 (Helicobacter pylori (strain HPAG1)).